We begin with the raw amino-acid sequence, 461 residues long: Probable ornithine decarboxylase (461 aa).

The segment at 1 to 35 (MTGTKRNGEEVVNENNNNNVAEETNKKAKVDESST) is disordered. The span at 13–22 (NENNNNNVAE) shows a compositional bias: low complexity. The span at 23 to 32 (ETNKKAKVDE) shows a compositional bias: basic and acidic residues. N6-(pyridoxal phosphate)lysine is present on lysine 116. Residues serine 247, glycine 284, and 317–320 (EPGR) each bind pyridoxal 5'-phosphate. 375-376 (FD) is a substrate binding site. Residue cysteine 402 is the Proton donor; shared with dimeric partner of the active site. Aspartate 403 contributes to the substrate binding site. Tyrosine 431 is a binding site for pyridoxal 5'-phosphate.

This sequence belongs to the Orn/Lys/Arg decarboxylase class-II family. As to quaternary structure, homodimer. Only the dimer is catalytically active, as the active sites are constructed of residues from both monomers. Pyridoxal 5'-phosphate is required as a cofactor.

The enzyme catalyses L-ornithine + H(+) = putrescine + CO2. Its pathway is amine and polyamine biosynthesis; putrescine biosynthesis via L-ornithine pathway; putrescine from L-ornithine: step 1/1. With respect to regulation, inhibited by antizyme (AZ) in response to polyamine levels. AZ inhibits the assembly of the functional homodimer by binding to ODC monomers and targeting them for ubiquitin-independent proteolytic destruction by the 26S proteasome. Functionally, catalyzes the first and rate-limiting step of polyamine biosynthesis that converts ornithine into putrescine, which is the precursor for the polyamines, spermidine and spermine. Polyamines are essential for cell proliferation and are implicated in cellular processes, ranging from DNA replication to apoptosis. This Dictyostelium discoideum (Social amoeba) protein is Probable ornithine decarboxylase (odc).